We begin with the raw amino-acid sequence, 271 residues long: Mediator of RNA polymerase II transcription subunit 18 (271 aa).

The tract at residues 89 to 119 (FGGNPSSSGDPDVSMSGLEEKPSSSSSSYSY) is disordered.

The protein belongs to the Mediator complex subunit 18 family. Component of the Mediator complex.

Its subcellular location is the nucleus. Functionally, component of the Mediator complex, a coactivator involved in the regulated transcription of nearly all RNA polymerase II-dependent genes. Mediator functions as a bridge to convey information from gene-specific regulatory proteins to the basal RNA polymerase II transcription machinery. Mediator is recruited to promoters by direct interactions with regulatory proteins and serves as a scaffold for the assembly of a functional preinitiation complex with RNA polymerase II and the general transcription factors. The polypeptide is Mediator of RNA polymerase II transcription subunit 18 (srb5) (Aspergillus niger (strain ATCC MYA-4892 / CBS 513.88 / FGSC A1513)).